The sequence spans 260 residues: Indole-3-glycerol phosphate synthase (260 aa).

Belongs to the TrpC family.

The catalysed reaction is 1-(2-carboxyphenylamino)-1-deoxy-D-ribulose 5-phosphate + H(+) = (1S,2R)-1-C-(indol-3-yl)glycerol 3-phosphate + CO2 + H2O. It functions in the pathway amino-acid biosynthesis; L-tryptophan biosynthesis; L-tryptophan from chorismate: step 4/5. This Staphylococcus aureus (strain MRSA252) protein is Indole-3-glycerol phosphate synthase.